A 138-amino-acid polypeptide reads, in one-letter code: ATP synthase epsilon chain (138 aa).

The protein belongs to the ATPase epsilon chain family. As to quaternary structure, F-type ATPases have 2 components, CF(1) - the catalytic core - and CF(0) - the membrane proton channel. CF(1) has five subunits: alpha(3), beta(3), gamma(1), delta(1), epsilon(1). CF(0) has three main subunits: a, b and c.

The protein localises to the cell inner membrane. In terms of biological role, produces ATP from ADP in the presence of a proton gradient across the membrane. This chain is ATP synthase epsilon chain, found in Geotalea daltonii (strain DSM 22248 / JCM 15807 / FRC-32) (Geobacter daltonii).